We begin with the raw amino-acid sequence, 45 residues long: Non-specific lipid-transfer protein (45 aa).

Belongs to the plant LTP family. In terms of tissue distribution, expressed in pollen.

Its function is as follows. Plant non-specific lipid-transfer proteins transfer phospholipids as well as galactolipids across membranes. May play a role in wax or cutin deposition in the cell walls of expanding epidermal cells and certain secretory tissues. The polypeptide is Non-specific lipid-transfer protein (Broussonetia papyrifera (Paper mulberry)).